Here is a 554-residue protein sequence, read N- to C-terminus: uncharacterized protein (554 aa).

Positions 1–25 (MSSSIPPRLYDMSPTESKKQEDVSE) are disordered. Ser-13 carries the phosphoserine modification. The next 6 membrane-spanning stretches (helical) occupy residues 82 to 102 (FFVA…TSLI), 120 to 140 (APYL…VWSL), 149 to 169 (WAFN…GASP), 171 to 191 (FASI…NLPV), 210 to 230 (VMSF…WGLI), and 253 to 273 (FLFT…LVSV). Ser-334 carries the post-translational modification Phosphoserine. 6 helical membrane-spanning segments follow: residues 364-384 (LAIS…AFPL), 412-432 (SLIV…LVEF), 437-457 (KGTL…STTA), 462-482 (AYLG…GVLY), 497-517 (AVGL…VIAM), and 525-545 (APIF…VFFP).

This sequence belongs to the major facilitator superfamily.

The protein localises to the endoplasmic reticulum. It is found in the membrane. This is an uncharacterized protein from Schizosaccharomyces pombe (strain 972 / ATCC 24843) (Fission yeast).